The primary structure comprises 641 residues: Threonine--tRNA ligase (641 aa).

The region spanning Met1–Thr61 is the TGS domain. Residues Asp242 to Pro533 are catalytic. Zn(2+)-binding residues include Cys333, His384, and His510.

This sequence belongs to the class-II aminoacyl-tRNA synthetase family. As to quaternary structure, homodimer. Zn(2+) serves as cofactor.

It localises to the cytoplasm. The enzyme catalyses tRNA(Thr) + L-threonine + ATP = L-threonyl-tRNA(Thr) + AMP + diphosphate + H(+). Its function is as follows. Catalyzes the attachment of threonine to tRNA(Thr) in a two-step reaction: L-threonine is first activated by ATP to form Thr-AMP and then transferred to the acceptor end of tRNA(Thr). Also edits incorrectly charged L-seryl-tRNA(Thr). This Marinobacter nauticus (strain ATCC 700491 / DSM 11845 / VT8) (Marinobacter aquaeolei) protein is Threonine--tRNA ligase.